Reading from the N-terminus, the 216-residue chain is Cytochrome c biogenesis ATP-binding export protein CcmA (216 aa).

Residues 5 to 216 form the ABC transporter domain; that stretch reads ISVDTLLSAS…RKIRLDYRFV (212 aa). Position 43–50 (43–50) interacts with ATP; sequence GPNGAGKT.

It belongs to the ABC transporter superfamily. CcmA exporter (TC 3.A.1.107) family. As to quaternary structure, the complex is composed of two ATP-binding proteins (CcmA) and two transmembrane proteins (CcmB).

It is found in the cell inner membrane. It catalyses the reaction heme b(in) + ATP + H2O = heme b(out) + ADP + phosphate + H(+). Functionally, part of the ABC transporter complex CcmAB involved in the biogenesis of c-type cytochromes; once thought to export heme, this seems not to be the case, but its exact role is uncertain. Responsible for energy coupling to the transport system. The polypeptide is Cytochrome c biogenesis ATP-binding export protein CcmA (Shewanella oneidensis (strain ATCC 700550 / JCM 31522 / CIP 106686 / LMG 19005 / NCIMB 14063 / MR-1)).